The primary structure comprises 359 residues: Putative nucleotidyltransferase MAB21L1 (359 aa).

A ribonucleoside 5'-triphosphate contacts are provided by residues 23–24 and 63–66; these read RK and YEGL. Residues E73 and E75 each coordinate Mg(2+). A ribonucleoside 5'-triphosphate is bound by residues K248 and 252–255; that span reads SLLK.

This sequence belongs to the mab-21 family. Monomer. Homodecamer; composed of 2 back to back homopentamers. The protein may exist as monomer in solution and oiligomerizes upon ligand binding.

It localises to the nucleus. Putative nucleotidyltransferase required for several aspects of embryonic development including normal development of the eye. It is unclear whether it displays nucleotidyltransferase activity in vivo. Binds single-stranded RNA (ssRNA). This Xenopus laevis (African clawed frog) protein is Putative nucleotidyltransferase MAB21L1 (mab21l1).